Here is a 154-residue protein sequence, read N- to C-terminus: Histone H2B.5 (154 aa).

Basic and acidic residues predominate over residues 1–25 (MAPKAEKKPAAKKVAEEEPSEKAAP). Residues 1–62 (MAPKAEKKPA…DKKGRKKAKK (62 aa)) form a disordered region. N6-acetyllysine occurs at positions 7 and 39. Lys-150 is covalently cross-linked (Glycyl lysine isopeptide (Lys-Gly) (interchain with G-Cter in ubiquitin)).

It belongs to the histone H2B family. As to quaternary structure, the nucleosome is a histone octamer containing two molecules each of H2A, H2B, H3 and H4 assembled in one H3-H4 heterotetramer and two H2A-H2B heterodimers. The octamer wraps approximately 147 bp of DNA. Post-translationally, can be acetylated to form H2BK6ac and H2BK33ac. In terms of processing, monoubiquitinated to form H2BK143ub1; may give a specific tag for epigenetic transcriptional activation.

The protein resides in the nucleus. Its subcellular location is the chromosome. In terms of biological role, core component of nucleosome. Nucleosomes wrap and compact DNA into chromatin, limiting DNA accessibility to the cellular machineries which require DNA as a template. Histones thereby play a central role in transcription regulation, DNA repair, DNA replication and chromosomal stability. DNA accessibility is regulated via a complex set of post-translational modifications of histones, also called histone code, and nucleosome remodeling. The protein is Histone H2B.5 of Zea mays (Maize).